A 138-amino-acid polypeptide reads, in one-letter code: Probable histone H2AXb (138 aa).

A compositionally biased stretch (gly residues) spans 1 to 10; that stretch reads MSSAGGGGGR. The tract at residues 1 to 24 is disordered; that stretch reads MSSAGGGGGRGKSKGSKSVSRSSK. A Phosphoserine; by ATM and ATR modification is found at Ser135. The [ST]-Q motif signature appears at 135–136; sequence SQ.

It belongs to the histone H2A family. The nucleosome is a histone octamer containing two molecules each of H2A, H2B, H3 and H4 assembled in one H3-H4 heterotetramer and two H2A-H2B heterodimers. The octamer wraps approximately 147 bp of DNA. Interacts with numerous proteins required for DNA damage signaling and repair when phosphorylated on Ser-135. Phosphorylated to form H2AXS139ph (gamma-H2AX) in response to DNA double strand breaks (DSBs) generated by exogenous genotoxic agents and by stalled replication forks, and may also occur during meiotic recombination events. Phosphorylation can extend up to several thousand nucleosomes from the actual site of the DSB and may mark the surrounding chromatin for recruitment of proteins required for DNA damage signaling and repair. Widespread phosphorylation may also serve to amplify the damage signal or aid repair of persistent lesions. H2AXS139ph in response to ionizing radiation is mediated by ATM while defects in DNA replication induce H2AXS139ph subsequent to activation of ATR. Dephosphorylation of H2AXS139ph by PP2A is required for DNA DSB repair.

It is found in the nucleus. Its subcellular location is the chromosome. Variant histone H2A which replaces conventional H2A in a subset of nucleosomes. Nucleosomes wrap and compact DNA into chromatin, limiting DNA accessibility to the cellular machineries which require DNA as a template. Histones thereby play a central role in transcription regulation, DNA repair, DNA replication and chromosomal stability. DNA accessibility is regulated via a complex set of post-translational modifications of histones, also called histone code, and nucleosome remodeling. Required for checkpoint-mediated arrest of cell cycle progression in response to low doses of ionizing radiation and for efficient repair of DNA double strand breaks (DSBs) specifically when modified by C-terminal phosphorylation. The protein is Probable histone H2AXb of Oryza sativa subsp. indica (Rice).